A 525-amino-acid polypeptide reads, in one-letter code: Squalene epoxidase 3 (525 aa).

The chain crosses the membrane as a helical span at residues 9–29 (HCILTTTFVASLFAFLLLYVL). FAD is bound by residues 64-65 (VA), 84-85 (ER), Arg-92, Arg-163, Val-179, Asp-341, and Met-354. Transmembrane regions (helical) follow at residues 452–472 (LVLH…VPLP) and 477–497 (LWLG…IIKA).

The protein belongs to the squalene monooxygenase family. Requires FAD as cofactor. Expressed in seedlings, leaves, stems, inflorescences and siliques.

It is found in the membrane. The enzyme catalyses squalene + reduced [NADPH--hemoprotein reductase] + O2 = (S)-2,3-epoxysqualene + oxidized [NADPH--hemoprotein reductase] + H2O + H(+). The protein operates within terpene metabolism; lanosterol biosynthesis; lanosterol from farnesyl diphosphate: step 2/3. Functionally, catalyzes the stereospecific oxidation of squalene to (S)-2,3-epoxysqualene, and is considered to be a rate-limiting enzyme in steroid biosynthesis. Can produce not only oxidosqualene, but also 2,3:22,23-dioxidosqualene. The polypeptide is Squalene epoxidase 3 (SQE3) (Arabidopsis thaliana (Mouse-ear cress)).